A 488-amino-acid chain; its full sequence is Protein nucleotidyltransferase YdiU (488 aa).

Gly-90, Gly-92, Arg-93, Lys-113, Asp-125, Gly-126, Arg-176, and Arg-183 together coordinate ATP. Asp-252 serves as the catalytic Proton acceptor. Mg(2+) is bound by residues Asn-253 and Asp-262. Asp-262 contacts ATP.

It belongs to the SELO family. The cofactor is Mg(2+). Mn(2+) serves as cofactor.

The enzyme catalyses L-seryl-[protein] + ATP = 3-O-(5'-adenylyl)-L-seryl-[protein] + diphosphate. It catalyses the reaction L-threonyl-[protein] + ATP = 3-O-(5'-adenylyl)-L-threonyl-[protein] + diphosphate. It carries out the reaction L-tyrosyl-[protein] + ATP = O-(5'-adenylyl)-L-tyrosyl-[protein] + diphosphate. The catalysed reaction is L-histidyl-[protein] + UTP = N(tele)-(5'-uridylyl)-L-histidyl-[protein] + diphosphate. The enzyme catalyses L-seryl-[protein] + UTP = O-(5'-uridylyl)-L-seryl-[protein] + diphosphate. It catalyses the reaction L-tyrosyl-[protein] + UTP = O-(5'-uridylyl)-L-tyrosyl-[protein] + diphosphate. Functionally, nucleotidyltransferase involved in the post-translational modification of proteins. It can catalyze the addition of adenosine monophosphate (AMP) or uridine monophosphate (UMP) to a protein, resulting in modifications known as AMPylation and UMPylation. The chain is Protein nucleotidyltransferase YdiU from Thiobacillus denitrificans (strain ATCC 25259 / T1).